Consider the following 772-residue polypeptide: Phenylalanine--tRNA ligase beta subunit (772 aa).

The 119-residue stretch at 40 to 158 (IKPSTNLVFA…DHYKTPNQIF (119 aa)) folds into the tRNA-binding domain. The 72-residue stretch at 397–468 (SVHNVIKNKI…KKISIQEIKP (72 aa)) folds into the B5 domain. The Mg(2+) site is built by Asp446, Asp452, Glu455, and Asp456. In terms of domain architecture, FDX-ACB spans 691-772 (SMYHDVIRDI…QEVNNYLKQF (82 aa)).

The protein belongs to the phenylalanyl-tRNA synthetase beta subunit family. Type 1 subfamily. In terms of assembly, tetramer of two alpha and two beta subunits. Mg(2+) serves as cofactor.

It is found in the cytoplasm. It catalyses the reaction tRNA(Phe) + L-phenylalanine + ATP = L-phenylalanyl-tRNA(Phe) + AMP + diphosphate + H(+). This chain is Phenylalanine--tRNA ligase beta subunit (pheT), found in Ureaplasma parvum serovar 3 (strain ATCC 700970).